Consider the following 195-residue polypeptide: MARRNEERGDRRNREEERDSEIVEKLVHINRVAATVKGGRRFSFAALMVVGDQKGRVGFGHGKAREVPEAIRKATEEAKKSMIRVPLRESRTLHHDGAGRWGAGKVMVRAAPPGTGVIAGGPMRAVLETLGVQDVVGKSVGSSNPYNMVRATFEALKAQSSPRQVAAKRGKKVSDVIGRRADGASAAQPAADAEG.

Residues 22 to 85 form the S5 DRBM domain; it reads IVEKLVHINR…EEAKKSMIRV (64 aa). Residues 164-195 are disordered; that stretch reads QVAAKRGKKVSDVIGRRADGASAAQPAADAEG. Residues 172-182 show a composition bias toward basic and acidic residues; sequence KVSDVIGRRAD. The span at 183–195 shows a compositional bias: low complexity; sequence GASAAQPAADAEG.

This sequence belongs to the universal ribosomal protein uS5 family. In terms of assembly, part of the 30S ribosomal subunit. Contacts proteins S4 and S8.

In terms of biological role, with S4 and S12 plays an important role in translational accuracy. Functionally, located at the back of the 30S subunit body where it stabilizes the conformation of the head with respect to the body. This chain is Small ribosomal subunit protein uS5, found in Phenylobacterium zucineum (strain HLK1).